Consider the following 141-residue polypeptide: Hemoglobin subunit alpha-1/2 (141 aa).

The Globin domain occupies valine 1 to arginine 141. Position 3 is a phosphoserine (serine 3). Lysine 7 carries the N6-succinyllysine modification. Phosphothreonine is present on threonine 8. At lysine 11 the chain carries N6-succinyllysine. Lysine 16 is subject to N6-acetyllysine; alternate. Lysine 16 is modified (N6-succinyllysine; alternate). At tyrosine 24 the chain carries Phosphotyrosine. Lysine 40 is modified (N6-succinyllysine). At serine 49 the chain carries Phosphoserine. Histidine 58 is a binding site for O2. Position 87 (histidine 87) interacts with heme b. Serine 102 carries the phosphoserine modification. A Phosphothreonine modification is found at threonine 108. Serine 124 bears the Phosphoserine mark. Phosphothreonine occurs at positions 134 and 137. At serine 138 the chain carries Phosphoserine.

It belongs to the globin family. Heterotetramer of two alpha chains and two beta chains. As to expression, red blood cells.

Involved in oxygen transport from the lung to the various peripheral tissues. The protein is Hemoglobin subunit alpha-1/2 of Tapirus terrestris (Lowland tapir).